We begin with the raw amino-acid sequence, 374 residues long: Lipid-A-disaccharide synthase (374 aa).

It belongs to the LpxB family.

The catalysed reaction is a lipid X + a UDP-2-N,3-O-bis[(3R)-3-hydroxyacyl]-alpha-D-glucosamine = a lipid A disaccharide + UDP + H(+). The protein operates within bacterial outer membrane biogenesis; LPS lipid A biosynthesis. Condensation of UDP-2,3-diacylglucosamine and 2,3-diacylglucosamine-1-phosphate to form lipid A disaccharide, a precursor of lipid A, a phosphorylated glycolipid that anchors the lipopolysaccharide to the outer membrane of the cell. This is Lipid-A-disaccharide synthase from Pseudomonas fluorescens (strain ATCC BAA-477 / NRRL B-23932 / Pf-5).